The primary structure comprises 136 residues: Histone H3.1 (136 aa).

A disordered region spans residues 1–43; sequence MARTKQTARKSTGGKAPRKQLATKAARKSAPATGGVKKPHRYR. Arg3 carries the asymmetric dimethylarginine; by PRMT6; alternate modification. Arg3 is modified (citrulline; alternate). Phosphothreonine; by HASPIN and VRK1 is present on Thr4. Allysine; alternate is present on Lys5. Lys5 bears the N6,N6,N6-trimethyllysine; alternate mark. Lys5 bears the N6,N6-dimethyllysine; alternate mark. Lys5 carries the N6-(2-hydroxyisobutyryl)lysine; alternate modification. Lys5 carries the N6-(beta-hydroxybutyryl)lysine; alternate modification. Lys5 bears the N6-acetyllysine; alternate mark. Position 5 is an N6-crotonyllysine; alternate (Lys5). The residue at position 5 (Lys5) is an N6-methyllysine; alternate. Residue Gln6 is modified to 5-glutamyl dopamine; alternate. 5-glutamyl serotonin; alternate is present on Gln6. The residue at position 7 (Thr7) is a Phosphothreonine; by PKC. Arg9 carries the citrulline; alternate modification. Symmetric dimethylarginine; by PRMT5; alternate is present on Arg9. The residue at position 10 (Lys10) is an N6,N6,N6-trimethyllysine; alternate. Position 10 is an N6,N6-dimethyllysine; alternate (Lys10). N6-(2-hydroxyisobutyryl)lysine; alternate is present on Lys10. Position 10 is an N6-(beta-hydroxybutyryl)lysine; alternate (Lys10). N6-acetyllysine; alternate is present on Lys10. An N6-crotonyllysine; alternate modification is found at Lys10. Lys10 is modified (N6-methyllysine; alternate). Position 10 is an N6-butyryllysine; alternate (Lys10). Lys10 is subject to N6-lactoyllysine; alternate. Position 11 is an ADP-ribosylserine; alternate (Ser11). Ser11 bears the Phosphoserine; alternate; by AURKB, AURKC, RPS6KA3, RPS6KA4 and RPS6KA5 mark. Phosphothreonine; by PKC and CHEK1 is present on Thr12. Lys15 is modified (N6-(2-hydroxyisobutyryl)lysine; alternate). Lys15 is modified (N6-(beta-hydroxybutyryl)lysine; alternate). Lys15 carries the N6-acetyllysine; alternate modification. Lys15 carries the post-translational modification N6-lactoyllysine; alternate. N6-glutaryllysine; alternate is present on Lys15. Residue Lys15 is modified to N6-succinyllysine; alternate. Arg18 carries the citrulline; alternate modification. At Arg18 the chain carries Asymmetric dimethylarginine; by CARM1; alternate. N6-(2-hydroxyisobutyryl)lysine; alternate occurs at positions 19 and 24. 2 positions are modified to N6-(beta-hydroxybutyryl)lysine; alternate: Lys19 and Lys24. Residues Lys19 and Lys24 each carry the N6-acetyllysine; alternate modification. Residues Lys19 and Lys24 each carry the N6-crotonyllysine; alternate modification. Residues Lys19 and Lys24 each carry the N6-methyllysine; alternate modification. N6-butyryllysine; alternate is present on residues Lys19 and Lys24. N6-lactoyllysine; alternate occurs at positions 19 and 24. Residues Lys19 and Lys24 each carry the N6-glutaryllysine; alternate modification. A lipid anchor (N6-decanoyllysine) is attached at Lys19. Position 27 is a citrulline (Arg27). The residue at position 28 (Lys28) is an N6,N6,N6-trimethyllysine; alternate. Lys28 is modified (N6,N6-dimethyllysine; alternate). Position 28 is an N6-(2-hydroxyisobutyryl)lysine; alternate (Lys28). The residue at position 28 (Lys28) is an N6-(beta-hydroxybutyryl)lysine; alternate. Position 28 is an N6-acetyllysine; alternate (Lys28). N6-crotonyllysine; alternate is present on Lys28. An N6-methyllysine; alternate modification is found at Lys28. At Lys28 the chain carries N6-lactoyllysine; alternate. Lys28 is subject to N6-glutaryllysine; alternate. Ser29 carries the post-translational modification ADP-ribosylserine; alternate. Position 29 is a phosphoserine; alternate; by AURKB, AURKC and RPS6KA5 (Ser29). At Lys37 the chain carries N6,N6,N6-trimethyllysine; alternate. Lys37 bears the N6,N6-dimethyllysine; alternate mark. N6-(2-hydroxyisobutyryl)lysine; alternate is present on Lys37. The residue at position 37 (Lys37) is an N6-acetyllysine; alternate. The residue at position 37 (Lys37) is an N6-methyllysine; alternate. Lys38 carries the post-translational modification N6-methyllysine. At Tyr42 the chain carries Phosphotyrosine. At Lys57 the chain carries N6,N6,N6-trimethyllysine; alternate. Lys57 bears the N6-(2-hydroxyisobutyryl)lysine; alternate mark. Lys57 bears the N6-(beta-hydroxybutyryl)lysine; alternate mark. An N6-acetyllysine; alternate modification is found at Lys57. Residue Lys57 is modified to N6-crotonyllysine; alternate. Position 57 is an N6-lactoyllysine; alternate (Lys57). Lys57 is modified (N6-glutaryllysine; alternate). N6-succinyllysine; alternate is present on Lys57. N6-methyllysine; by EHMT2; alternate is present on Lys57. Ser58 is modified (phosphoserine). Lys65 and Lys80 each carry N6-(2-hydroxyisobutyryl)lysine; alternate. N6-methyllysine; alternate is present on residues Lys65 and Lys80. Lys80 carries the N6,N6,N6-trimethyllysine; alternate modification. N6,N6-dimethyllysine; alternate is present on Lys80. An N6-(beta-hydroxybutyryl)lysine; alternate modification is found at Lys80. Lys80 carries the post-translational modification N6-acetyllysine; alternate. The residue at position 80 (Lys80) is an N6-lactoyllysine; alternate. Lys80 bears the N6-glutaryllysine; alternate mark. At Lys80 the chain carries N6-succinyllysine; alternate. The residue at position 81 (Thr81) is a Phosphothreonine. A Phosphoserine modification is found at Ser87. Thr108 bears the Phosphothreonine mark. Residues Lys116 and Lys123 each carry the N6-acetyllysine; alternate modification. Residues Lys116 and Lys123 each carry the N6-glutaryllysine; alternate modification. Lys123 bears the N6-(2-hydroxyisobutyryl)lysine; alternate mark. Lys123 carries the post-translational modification N6-(beta-hydroxybutyryl)lysine; alternate. Lys123 is subject to N6-methyllysine; alternate. An N6-succinyllysine; alternate modification is found at Lys123.

This sequence belongs to the histone H3 family. In terms of assembly, the nucleosome is a histone octamer containing two molecules each of H2A, H2B, H3 and H4 assembled in one H3-H4 heterotetramer and two H2A-H2B heterodimers. The octamer wraps approximately 147 bp of DNA. Interacts with TONSL; CHAF1A; CHAF1B; MCM2 and DNAJC9. Interacts with NASP; NASP is a histone chaperone that stabilizes and maintains a soluble pool of Histone H3-H4 dimers. Post-translationally, acetylation is generally linked to gene activation. Acetylation on Lys-10 (H3K9ac) impairs methylation at Arg-9 (H3R8me2s). Acetylation on Lys-19 (H3K18ac) and Lys-24 (H3K24ac) favors methylation at Arg-18 (H3R17me). Acetylation at Lys-123 (H3K122ac) by EP300/p300 plays a central role in chromatin structure: localizes at the surface of the histone octamer and stimulates transcription, possibly by promoting nucleosome instability. In terms of processing, citrullination at Arg-9 (H3R8ci) and/or Arg-18 (H3R17ci) by PADI4 impairs methylation and represses transcription. Asymmetric dimethylation at Arg-18 (H3R17me2a) by CARM1 is linked to gene activation. Symmetric dimethylation at Arg-9 (H3R8me2s) by PRMT5 is linked to gene repression. Asymmetric dimethylation at Arg-3 (H3R2me2a) by PRMT6 is linked to gene repression and is mutually exclusive with H3 Lys-5 methylation (H3K4me2 and H3K4me3). H3R2me2a is present at the 3' of genes regardless of their transcription state and is enriched on inactive promoters, while it is absent on active promoters. Post-translationally, methylation at Lys-5 (H3K4me), Lys-37 (H3K36me) and Lys-80 (H3K79me) are linked to gene activation. Methylation at Lys-5 (H3K4me) facilitates subsequent acetylation of H3 and H4. Methylation at Lys-80 (H3K79me) is associated with DNA double-strand break (DSB) responses and is a specific target for TP53BP1. Methylation at Lys-10 (H3K9me) and Lys-28 (H3K27me) are linked to gene repression. Methylation at Lys-10 (H3K9me) is a specific target for HP1 proteins (CBX1, CBX3 and CBX5) and prevents subsequent phosphorylation at Ser-11 (H3S10ph) and acetylation of H3 and H4. Methylation at Lys-5 (H3K4me) and Lys-80 (H3K79me) require preliminary monoubiquitination of H2B at 'Lys-120'. Methylation at Lys-10 (H3K9me) and Lys-28 (H3K27me) are enriched in inactive X chromosome chromatin. Monomethylation at Lys-57 (H3K56me1) by EHMT2/G9A in G1 phase promotes interaction with PCNA and is required for DNA replication. In terms of processing, phosphorylated at Thr-4 (H3T3ph) by VRK1. Phosphorylated at Thr-4 (H3T3ph) by HASPIN during prophase and dephosphorylated during anaphase. Phosphorylation at Ser-11 (H3S10ph) by AURKB is crucial for chromosome condensation and cell-cycle progression during mitosis and meiosis. In addition phosphorylation at Ser-11 (H3S10ph) by RPS6KA4 and RPS6KA5 is important during interphase because it enables the transcription of genes following external stimulation, like mitogens, stress, growth factors or UV irradiation and result in the activation of genes, such as c-fos and c-jun. Phosphorylation at Ser-11 (H3S10ph), which is linked to gene activation, prevents methylation at Lys-10 (H3K9me) but facilitates acetylation of H3 and H4. Phosphorylation at Ser-11 (H3S10ph) by AURKB mediates the dissociation of HP1 proteins (CBX1, CBX3 and CBX5) from heterochromatin. Phosphorylation at Ser-11 (H3S10ph) is also an essential regulatory mechanism for neoplastic cell transformation. Phosphorylated at Ser-29 (H3S28ph) by MAP3K20 isoform 1, RPS6KA5 or AURKB during mitosis or upon ultraviolet B irradiation. Phosphorylation at Thr-7 (H3T6ph) by PRKCB is a specific tag for epigenetic transcriptional activation that prevents demethylation of Lys-5 (H3K4me) by LSD1/KDM1A. At centromeres, specifically phosphorylated at Thr-12 (H3T11ph) from prophase to early anaphase, by DAPK3 and PKN1. Phosphorylation at Thr-12 (H3T11ph) by PKN1 or isoform M2 of PKM (PKM2) is a specific tag for epigenetic transcriptional activation that promotes demethylation of Lys-10 (H3K9me) by KDM4C/JMJD2C. Phosphorylation at Thr-12 (H3T11ph) by chromatin-associated CHEK1 regulates the transcription of cell cycle regulatory genes by modulating acetylation of Lys-10 (H3K9ac). Phosphorylation at Tyr-42 (H3Y41ph) by JAK2 promotes exclusion of CBX5 (HP1 alpha) from chromatin. Monoubiquitinated by RAG1 in lymphoid cells, monoubiquitination is required for V(D)J recombination. Ubiquitinated by the CUL4-DDB-RBX1 complex in response to ultraviolet irradiation. This may weaken the interaction between histones and DNA and facilitate DNA accessibility to repair proteins. Post-translationally, lysine deamination at Lys-5 (H3K4all) to form allysine is mediated by LOXL2. Allysine formation by LOXL2 only takes place on H3K4me3 and results in gene repression. In terms of processing, crotonylation (Kcr) is specifically present in male germ cells and marks testis-specific genes in post-meiotic cells, including X-linked genes that escape sex chromosome inactivation in haploid cells. Crotonylation marks active promoters and enhancers and confers resistance to transcriptional repressors. It is also associated with post-meiotically activated genes on autosomes. Butyrylation of histones marks active promoters and competes with histone acetylation. It is present during late spermatogenesis. Post-translationally, succinylation at Lys-80 (H3K79succ) by KAT2A takes place with a maximum frequency around the transcription start sites of genes. It gives a specific tag for epigenetic transcription activation. Desuccinylation at Lys-123 (H3K122succ) by SIRT7 in response to DNA damage promotes chromatin condensation and double-strand breaks (DSBs) repair. In terms of processing, serine ADP-ribosylation by PARP1 or PARP2 constitutes the primary form of ADP-ribosylation of proteins in response to DNA damage. Serine ADP-ribosylation at Ser-11 (H3S10ADPr) promotes recruitment of CHD1L. H3S10ADPr is mutually exclusive with phosphorylation at Ser-11 (H3S10ph) and impairs acetylation at Lys-10 (H3K9ac). Serotonylated by TGM2 at Gln-6 (H3Q5ser) during serotonergic neuron differentiation. H3Q5ser is associated with trimethylation of Lys-5 (H3K4me3) and enhances general transcription factor IID (TFIID) complex-binding to H3K4me3, thereby facilitating transcription. Post-translationally, dopaminylated by TGM2 at Gln-6 (H3Q5dop) in ventral tegmental area (VTA) neurons. H3Q5dop mediates neurotransmission-independent role of nuclear dopamine by regulating relapse-related transcriptional plasticity in the reward system. In terms of processing, lactylated in macrophages by EP300/P300 by using lactoyl-CoA directly derived from endogenous or exogenous lactate, leading to stimulates gene transcription.

It is found in the nucleus. It localises to the chromosome. Its function is as follows. Core component of nucleosome. Nucleosomes wrap and compact DNA into chromatin, limiting DNA accessibility to the cellular machineries which require DNA as a template. Histones thereby play a central role in transcription regulation, DNA repair, DNA replication and chromosomal stability. DNA accessibility is regulated via a complex set of post-translational modifications of histones, also called histone code, and nucleosome remodeling. The chain is Histone H3.1 from Homo sapiens (Human).